Here is a 152-residue protein sequence, read N- to C-terminus: UPF0756 membrane protein Moth_1009 (152 aa).

The next 4 helical transmembrane spans lie at 5-25, 41-61, 75-95, and 117-137; these read LIIL…VALA, IFPF…IAAI, LGHV…LITT, and LILG…GPFI.

Belongs to the UPF0756 family.

It localises to the cell membrane. The polypeptide is UPF0756 membrane protein Moth_1009 (Moorella thermoacetica (strain ATCC 39073 / JCM 9320)).